A 2163-amino-acid chain; its full sequence is Myosin-VIIa (2163 aa).

One can recognise a Myosin motor domain in the interval 58-728 (QGVEDMISLG…HDLFLEQERD (671 aa)). 151 to 158 (GESGAGKT) is a binding site for ATP. 2 actin-binding regions span residues 607–629 (LDSLMKTLSSCQPFFIRCIKPNE) and 707–721 (QLGHTKVFLKDAHDL). IQ domains lie at 731 to 753 (LTRKILILQRSIRGWVYRRRFLR), 754 to 783 (MRQAAVTIQKFWKGYAQRQRYKKMKIGYMR), 800 to 822 (LRGHIVRLQARIRGYLVRREYGL), and 823 to 852 (KMWAVIKIQSHVRRMIAMNRYQKLKLEYRR). Positions 886–914 (RLNEIERKEIEQELEERRRVEVKKNIIND) form a coiled coil. The interval 937–958 (PDSSSEAPTPHGGRETSVFNDL) is disordered. The region spanning 1003–1239 (YSRKPLKHPL…PSWLELQATK (237 aa)) is the MyTH4 1 domain. The FERM 1 domain maps to 1244 to 1554 (IMLPITFMDG…YFLEGLKKRS (311 aa)). Residues 1552–1621 (KRSKFVIALQ…PAEIVYVLPS (70 aa)) enclose the SH3 domain. The region spanning 1697–1845 (YSREPLKQPL…PHQVEVEAIQ (149 aa)) is the MyTH4 2 domain. The 304-residue stretch at 1851–2154 (IFHKVYFPDD…SYISLMLTNM (304 aa)) folds into the FERM 2 domain.

It belongs to the TRAFAC class myosin-kinesin ATPase superfamily. Myosin family. In terms of assembly, homodimerizes in a two headed molecule through the formation of a coiled-coil rod.

Its subcellular location is the cytoplasm. In terms of biological role, myosins are actin-based motor molecules with ATPase activity. Unconventional myosins serve in intracellular movements: can function in cells as a single-molecule cargo transporter. A very slow and high-duty-ratio motor, may be suitable for tension maintenance of actin filaments. Their highly divergent tails are presumed to bind to membranous compartments, which would be moved relative to actin filaments. Plays a key role in the formation of cellular projections and other actin-based functions required for embryonic and larval viability. Necessary for auditory transduction: plays a role in Johnston organ (JO) organization by functioning in scolopidial apical attachment and therefore to acoustic stimulus propagation from the antenna a2/a3 joint to transducing elements. This Aedes aegypti (Yellowfever mosquito) protein is Myosin-VIIa.